The chain runs to 226 residues: Phosphoribosylformylglycinamidine synthase subunit PurQ (226 aa).

Residues 3–225 (FAVIVFPGSN…VKWGARHVTY (223 aa)) enclose the Glutamine amidotransferase type-1 domain. The active-site Nucleophile is the C86. Active-site residues include H194 and E196.

Part of the FGAM synthase complex composed of 1 PurL, 1 PurQ and 2 PurS subunits.

Its subcellular location is the cytoplasm. The catalysed reaction is N(2)-formyl-N(1)-(5-phospho-beta-D-ribosyl)glycinamide + L-glutamine + ATP + H2O = 2-formamido-N(1)-(5-O-phospho-beta-D-ribosyl)acetamidine + L-glutamate + ADP + phosphate + H(+). It catalyses the reaction L-glutamine + H2O = L-glutamate + NH4(+). It functions in the pathway purine metabolism; IMP biosynthesis via de novo pathway; 5-amino-1-(5-phospho-D-ribosyl)imidazole from N(2)-formyl-N(1)-(5-phospho-D-ribosyl)glycinamide: step 1/2. Part of the phosphoribosylformylglycinamidine synthase complex involved in the purines biosynthetic pathway. Catalyzes the ATP-dependent conversion of formylglycinamide ribonucleotide (FGAR) and glutamine to yield formylglycinamidine ribonucleotide (FGAM) and glutamate. The FGAM synthase complex is composed of three subunits. PurQ produces an ammonia molecule by converting glutamine to glutamate. PurL transfers the ammonia molecule to FGAR to form FGAM in an ATP-dependent manner. PurS interacts with PurQ and PurL and is thought to assist in the transfer of the ammonia molecule from PurQ to PurL. The sequence is that of Phosphoribosylformylglycinamidine synthase subunit PurQ from Exiguobacterium sp. (strain ATCC BAA-1283 / AT1b).